A 239-amino-acid polypeptide reads, in one-letter code: Superoxide dismutase [Mn] 3 (239 aa).

Positions 1–19 are enriched in polar residues; sequence ASTQQTPAQSPTASPTVST. The tract at residues 1-20 is disordered; sequence ASTQQTPAQSPTASPTVSTP. A signal peptide spans 1–30; sequence ASTQQTPAQSPTASPTVSTPVAYVDRPLTA. The Mn(2+) site is built by His-57, His-112, Asp-195, and His-199.

This sequence belongs to the iron/manganese superoxide dismutase family. As to quaternary structure, homodimer. The cofactor is Mn(2+).

The enzyme catalyses 2 superoxide + 2 H(+) = H2O2 + O2. In terms of biological role, destroys superoxide anion radicals which are normally produced within the cells and which are toxic to biological systems. The polypeptide is Superoxide dismutase [Mn] 3 (sodA3) (Leptolyngbya boryana (Plectonema boryanum)).